A 440-amino-acid chain; its full sequence is Thymidine phosphorylase (440 aa).

It belongs to the thymidine/pyrimidine-nucleoside phosphorylase family. Homodimer.

The enzyme catalyses thymidine + phosphate = 2-deoxy-alpha-D-ribose 1-phosphate + thymine. Its pathway is pyrimidine metabolism; dTMP biosynthesis via salvage pathway; dTMP from thymine: step 1/2. Its function is as follows. The enzymes which catalyze the reversible phosphorolysis of pyrimidine nucleosides are involved in the degradation of these compounds and in their utilization as carbon and energy sources, or in the rescue of pyrimidine bases for nucleotide synthesis. The sequence is that of Thymidine phosphorylase from Salmonella schwarzengrund (strain CVM19633).